The chain runs to 353 residues: Ion-translocating oxidoreductase complex subunit D (353 aa).

The next 3 helical transmembrane spans lie at 20–39, 68–88, and 129–149; these read LMRLVIYATLPGVLAQWYFF, PISHELFDGSALLTALLLGIC, and VMLLVSFPLQMTLWQPPLTLV. Thr187 bears the FMN phosphoryl threonine mark. Helical transmembrane passes span 215 to 235, 238 to 258, 267 to 287, and 300 to 320; these read LALGWEWVNAGFLLGGLFLIS, AIAWQTPISFLLSLFICSFIG, ASTMFHWFSGATMLGAFFILT, and IIVGLLAGLLVYLIRTSGGYP.

The protein belongs to the NqrB/RnfD family. The complex is composed of six subunits: RnfA, RnfB, RnfC, RnfD, RnfE and RnfG. It depends on FMN as a cofactor.

The protein localises to the cell inner membrane. Functionally, part of a membrane-bound complex that couples electron transfer with translocation of ions across the membrane. The chain is Ion-translocating oxidoreductase complex subunit D from Colwellia psychrerythraea (strain 34H / ATCC BAA-681) (Vibrio psychroerythus).